Reading from the N-terminus, the 233-residue chain is Biosynthetic peptidoglycan transglycosylase (233 aa).

The chain crosses the membrane as a helical span at residues 7 to 27 (VFTWLAKLVLGLFFASILSVV).

It belongs to the glycosyltransferase 51 family.

It localises to the cell inner membrane. The catalysed reaction is [GlcNAc-(1-&gt;4)-Mur2Ac(oyl-L-Ala-gamma-D-Glu-L-Lys-D-Ala-D-Ala)](n)-di-trans,octa-cis-undecaprenyl diphosphate + beta-D-GlcNAc-(1-&gt;4)-Mur2Ac(oyl-L-Ala-gamma-D-Glu-L-Lys-D-Ala-D-Ala)-di-trans,octa-cis-undecaprenyl diphosphate = [GlcNAc-(1-&gt;4)-Mur2Ac(oyl-L-Ala-gamma-D-Glu-L-Lys-D-Ala-D-Ala)](n+1)-di-trans,octa-cis-undecaprenyl diphosphate + di-trans,octa-cis-undecaprenyl diphosphate + H(+). It participates in cell wall biogenesis; peptidoglycan biosynthesis. Peptidoglycan polymerase that catalyzes glycan chain elongation from lipid-linked precursors. The sequence is that of Biosynthetic peptidoglycan transglycosylase from Shewanella oneidensis (strain ATCC 700550 / JCM 31522 / CIP 106686 / LMG 19005 / NCIMB 14063 / MR-1).